Reading from the N-terminus, the 131-residue chain is Holo-[acyl-carrier-protein] synthase (131 aa).

Residues aspartate 8 and glutamate 63 each coordinate Mg(2+).

Belongs to the P-Pant transferase superfamily. AcpS family. Requires Mg(2+) as cofactor.

The protein localises to the cytoplasm. It catalyses the reaction apo-[ACP] + CoA = holo-[ACP] + adenosine 3',5'-bisphosphate + H(+). Functionally, transfers the 4'-phosphopantetheine moiety from coenzyme A to a Ser of acyl-carrier-protein. This is Holo-[acyl-carrier-protein] synthase from Shewanella piezotolerans (strain WP3 / JCM 13877).